We begin with the raw amino-acid sequence, 301 residues long: Oxygen-dependent coproporphyrinogen-III oxidase (301 aa).

Residue serine 92 participates in substrate binding. Positions 96 and 106 each coordinate a divalent metal cation. Histidine 106 functions as the Proton donor in the catalytic mechanism. Residue 108–110 (NVR) coordinates substrate. 2 residues coordinate a divalent metal cation: histidine 145 and histidine 175. The important for dimerization stretch occupies residues 240-275 (YVEFNLVWDRGTLFGLQTGGRTESILMSMPPLVRWE). Residue 258 to 260 (GGR) coordinates substrate.

This sequence belongs to the aerobic coproporphyrinogen-III oxidase family. In terms of assembly, homodimer. A divalent metal cation is required as a cofactor.

The protein localises to the cytoplasm. The catalysed reaction is coproporphyrinogen III + O2 + 2 H(+) = protoporphyrinogen IX + 2 CO2 + 2 H2O. The protein operates within porphyrin-containing compound metabolism; protoporphyrin-IX biosynthesis; protoporphyrinogen-IX from coproporphyrinogen-III (O2 route): step 1/1. Involved in the heme biosynthesis. Catalyzes the aerobic oxidative decarboxylation of propionate groups of rings A and B of coproporphyrinogen-III to yield the vinyl groups in protoporphyrinogen-IX. The polypeptide is Oxygen-dependent coproporphyrinogen-III oxidase (Cronobacter sakazakii (strain ATCC BAA-894) (Enterobacter sakazakii)).